The sequence spans 233 residues: Fibrillarin-like rRNA/tRNA 2'-O-methyltransferase (233 aa).

S-adenosyl-L-methionine contacts are provided by residues 89-90 (TT), 108-109 (EF), 133-134 (DA), and 153-156 (DIAQ).

Belongs to the methyltransferase superfamily. Fibrillarin family. Interacts with nop5. Component of box C/D small ribonucleoprotein (sRNP) particles that contain rpl7ae, FlpA and nop5, plus a guide RNA.

In terms of biological role, involved in pre-rRNA and tRNA processing. Utilizes the methyl donor S-adenosyl-L-methionine to catalyze the site-specific 2'-hydroxyl methylation of ribose moieties in rRNA and tRNA. Site specificity is provided by a guide RNA that base pairs with the substrate. Methylation occurs at a characteristic distance from the sequence involved in base pairing with the guide RNA. The polypeptide is Fibrillarin-like rRNA/tRNA 2'-O-methyltransferase (Sulfurisphaera tokodaii (strain DSM 16993 / JCM 10545 / NBRC 100140 / 7) (Sulfolobus tokodaii)).